A 109-amino-acid chain; its full sequence is Thioredoxin 2 (109 aa).

In terms of domain architecture, Thioredoxin spans 2-109 (SGKYFEATDQ…IAKKLDEHIG (108 aa)). Cys-33 and Cys-36 are joined by a disulfide.

This sequence belongs to the thioredoxin family.

Its function is as follows. Participates in various redox reactions through the reversible oxidation of its active center dithiol to a disulfide and catalyzes dithiol-disulfide exchange reactions. The sequence is that of Thioredoxin 2 (trx2) from Chlorobaculum tepidum (strain ATCC 49652 / DSM 12025 / NBRC 103806 / TLS) (Chlorobium tepidum).